Consider the following 164-residue polypeptide: B-phycoerythrin alpha chain (164 aa).

Residues Cys-82 and Cys-139 each contribute to the (2R,3E)-phycoerythrobilin site.

This sequence belongs to the phycobiliprotein family. Heteromer of 6 alpha, 6 beta and one gamma chain. In terms of processing, contains two covalently linked bilin chromophores.

The protein localises to the plastid. Its subcellular location is the chloroplast thylakoid membrane. In terms of biological role, light-harvesting photosynthetic bile pigment-protein from the phycobiliprotein complex. The protein is B-phycoerythrin alpha chain (cpeA) of Porphyridium sordidum (Red alga).